A 579-amino-acid polypeptide reads, in one-letter code: MKYVVVSGGVISGIGKGVLASSTGMLMKTLGLKVTSIKIDPYMNIDAGTMSPLEHGECFVLDDGGETDLDLGNYERYLGVTLTKDHNITTGKIYSHVIAKERKGDYLGKTVQIVPHLTNAIQDWIERVAKIPVDDTGMEPDVCIIELGGTVGDIESAPFVEALRQFQFKVGKENFALIHVSLVPVIHGEQKTKPTQAAIKGLRSLGLVPDMIACRCSETLDKPTIDKIAMFCHVGPEQVVNVHDVNSTYHVPLLLLEQKMIDYLHARLKLDEISLTEEEKQRGLELLSKWKATTGNFDESMETVKIALVGKYTNLKDSYLSVIKALEHSSMKCRRKLDIKWVEATDLEPEAQESNKTKFHEAWNMVSTADGILIPGGFGVRGTEGMVLAARWARENHIPFLGVCLGLQIATIEFTRSVLGRKDSHSAEFYPDIDEKNHVVVFMPEIDKETMGGSMRLGLRPTFFQNETEWSQIKKLYGDVSEVHERHRHRYEINPKMVDELENNGLIFVGKDDTGKRCEILELKNHPYYIATQYHPEYTSKVLDPSKPFLGLVAASAGILQDVIEGKYDLEAGENKFNF.

The region spanning 305–559 (KIALVGKYTN…LGLVAASAGI (255 aa)) is the Glutamine amidotransferase type-1 domain. Cysteine 404 functions as the For GATase activity in the catalytic mechanism. Lysine 422 is covalently cross-linked (Glycyl lysine isopeptide (Lys-Gly) (interchain with G-Cter in ubiquitin)). Active-site for GATase activity residues include histidine 535 and glutamate 537.

This sequence belongs to the CTP synthase family. Homodimer. Oligomerizes to a tetramer in the presence of its substrates UTP and ATP.

It carries out the reaction UTP + L-glutamine + ATP + H2O = CTP + L-glutamate + ADP + phosphate + 2 H(+). The protein operates within pyrimidine metabolism; CTP biosynthesis via de novo pathway; CTP from UDP: step 2/2. Its activity is regulated as follows. Activated by GTP and inhibited by CTP. Its function is as follows. Catalyzes the ATP-dependent amination of UTP to CTP with either L-glutamine or ammonia as the source of nitrogen. The sequence is that of CTP synthase 1 (URA7) from Saccharomyces cerevisiae (strain ATCC 204508 / S288c) (Baker's yeast).